The primary structure comprises 156 residues: Ribosomal RNA large subunit methyltransferase H (156 aa).

S-adenosyl-L-methionine contacts are provided by residues Leu73, Gly104, and 123-128 (VSSLTL).

It belongs to the RNA methyltransferase RlmH family. In terms of assembly, homodimer.

It localises to the cytoplasm. The catalysed reaction is pseudouridine(1915) in 23S rRNA + S-adenosyl-L-methionine = N(3)-methylpseudouridine(1915) in 23S rRNA + S-adenosyl-L-homocysteine + H(+). Its function is as follows. Specifically methylates the pseudouridine at position 1915 (m3Psi1915) in 23S rRNA. This is Ribosomal RNA large subunit methyltransferase H from Paraburkholderia xenovorans (strain LB400).